The chain runs to 335 residues: MIEADRLIDATEKPNEDSIDRAIRPKLLADYRGQPHVKQQMEIFIEAARSRGEALDHLLIFGPPGLGKTTLANIVANELQVNIKATSGPVLEKAGDLAALLTNLEEGDVLFIDEIHRLSPQVEEILYPAMEDYQLDIMIGEGPAARSIKLDLPSFTLIGATTRAGSLTSPLRDRFGIVQRLEFYSVEDLSYIVGRSAHFLDLEMCDEGAVEIAKRSRGTPRIANRLLRRVRDYTQVKSDGTVNAEVAELALNMIDVDKSGFDYMDRKYLLAIIEKFMGGPVGLDNIAAAIGEEKETIEDVIEPFLIQQGFIQRTPRGRIVSDNAYHHFGLLPKQD.

A large ATPase domain (RuvB-L) region spans residues 4–184; the sequence is ADRLIDATEK…FGIVQRLEFY (181 aa). ATP is bound by residues isoleucine 23, arginine 24, glycine 65, lysine 68, threonine 69, threonine 70, 131–133, arginine 174, tyrosine 184, and arginine 221; that span reads EDY. Threonine 69 provides a ligand contact to Mg(2+). The small ATPAse domain (RuvB-S) stretch occupies residues 185–255; it reads SVEDLSYIVG…VAELALNMID (71 aa). The interval 258–335 is head domain (RuvB-H); the sequence is KSGFDYMDRK…HHFGLLPKQD (78 aa). DNA is bound by residues arginine 313 and arginine 318.

The protein belongs to the RuvB family. Homohexamer. Forms an RuvA(8)-RuvB(12)-Holliday junction (HJ) complex. HJ DNA is sandwiched between 2 RuvA tetramers; dsDNA enters through RuvA and exits via RuvB. An RuvB hexamer assembles on each DNA strand where it exits the tetramer. Each RuvB hexamer is contacted by two RuvA subunits (via domain III) on 2 adjacent RuvB subunits; this complex drives branch migration. In the full resolvosome a probable DNA-RuvA(4)-RuvB(12)-RuvC(2) complex forms which resolves the HJ.

The protein resides in the cytoplasm. The catalysed reaction is ATP + H2O = ADP + phosphate + H(+). Functionally, the RuvA-RuvB-RuvC complex processes Holliday junction (HJ) DNA during genetic recombination and DNA repair, while the RuvA-RuvB complex plays an important role in the rescue of blocked DNA replication forks via replication fork reversal (RFR). RuvA specifically binds to HJ cruciform DNA, conferring on it an open structure. The RuvB hexamer acts as an ATP-dependent pump, pulling dsDNA into and through the RuvAB complex. RuvB forms 2 homohexamers on either side of HJ DNA bound by 1 or 2 RuvA tetramers; 4 subunits per hexamer contact DNA at a time. Coordinated motions by a converter formed by DNA-disengaged RuvB subunits stimulates ATP hydrolysis and nucleotide exchange. Immobilization of the converter enables RuvB to convert the ATP-contained energy into a lever motion, pulling 2 nucleotides of DNA out of the RuvA tetramer per ATP hydrolyzed, thus driving DNA branch migration. The RuvB motors rotate together with the DNA substrate, which together with the progressing nucleotide cycle form the mechanistic basis for DNA recombination by continuous HJ branch migration. Branch migration allows RuvC to scan DNA until it finds its consensus sequence, where it cleaves and resolves cruciform DNA. In Pseudoalteromonas translucida (strain TAC 125), this protein is Holliday junction branch migration complex subunit RuvB.